Here is a 225-residue protein sequence, read N- to C-terminus: UPF0725 protein At5g63820 (225 aa).

It belongs to the UPF0725 (EMB2204) family.

This is UPF0725 protein At5g63820 from Arabidopsis thaliana (Mouse-ear cress).